The primary structure comprises 299 residues: Hydroxymethylglutaryl-CoA lyase YngG (299 aa).

Residues 7–274 enclose the Pyruvate carboxyltransferase domain; the sequence is VTIKEVGPRD…KTNVKLEKLL (268 aa). Residue Arg15 participates in substrate binding. A divalent metal cation contacts are provided by Asp16, His207, and His209. The active site involves Cys240. An a divalent metal cation-binding site is contributed by Asn249.

Belongs to the HMG-CoA lyase family. In terms of assembly, homodimer and homotetramer.

The enzyme catalyses (3S)-3-hydroxy-3-methylglutaryl-CoA = acetoacetate + acetyl-CoA. It participates in metabolic intermediate metabolism; (S)-3-hydroxy-3-methylglutaryl-CoA degradation; acetoacetate from (S)-3-hydroxy-3-methylglutaryl-CoA: step 1/1. In terms of biological role, involved in the catabolism of branched amino acids such as leucine. The sequence is that of Hydroxymethylglutaryl-CoA lyase YngG (yngG) from Bacillus subtilis (strain 168).